The primary structure comprises 123 residues: Ribosome-binding factor A (123 aa).

Belongs to the RbfA family. Monomer. Binds 30S ribosomal subunits, but not 50S ribosomal subunits or 70S ribosomes.

The protein localises to the cytoplasm. Its function is as follows. One of several proteins that assist in the late maturation steps of the functional core of the 30S ribosomal subunit. Associates with free 30S ribosomal subunits (but not with 30S subunits that are part of 70S ribosomes or polysomes). Required for efficient processing of 16S rRNA. May interact with the 5'-terminal helix region of 16S rRNA. The protein is Ribosome-binding factor A of Trichlorobacter lovleyi (strain ATCC BAA-1151 / DSM 17278 / SZ) (Geobacter lovleyi).